The sequence spans 737 residues: DNA topoisomerase 4 subunit A (737 aa).

A Topo IIA-type catalytic domain is found at 32 to 496; the sequence is LPDVRDGLKP…SFEEVTLTNQ (465 aa). The O-(5'-phospho-DNA)-tyrosine intermediate role is filled by Y120.

This sequence belongs to the type II topoisomerase GyrA/ParC subunit family. ParC type 1 subfamily. In terms of assembly, heterotetramer composed of ParC and ParE.

Its subcellular location is the cell membrane. It carries out the reaction ATP-dependent breakage, passage and rejoining of double-stranded DNA.. Its function is as follows. Topoisomerase IV is essential for chromosome segregation. It relaxes supercoiled DNA. Performs the decatenation events required during the replication of a circular DNA molecule. The protein is DNA topoisomerase 4 subunit A of Rickettsia felis (strain ATCC VR-1525 / URRWXCal2) (Rickettsia azadi).